We begin with the raw amino-acid sequence, 407 residues long: Actinorhodin polyketide putative beta-ketoacyl synthase 2 (407 aa).

Residues 1–402 (MSVLITGVGV…GFNSAAVLRR (402 aa)) enclose the Ketosynthase family 3 (KS3) domain.

The protein belongs to the thiolase-like superfamily. Beta-ketoacyl-ACP synthases family.

The chain is Actinorhodin polyketide putative beta-ketoacyl synthase 2 from Streptomyces coelicolor (strain ATCC BAA-471 / A3(2) / M145).